The sequence spans 272 residues: Tryptophan synthase alpha chain (272 aa).

Residues Glu53 and Asp64 each act as proton acceptor in the active site.

It belongs to the TrpA family. In terms of assembly, tetramer of two alpha and two beta chains.

It catalyses the reaction (1S,2R)-1-C-(indol-3-yl)glycerol 3-phosphate + L-serine = D-glyceraldehyde 3-phosphate + L-tryptophan + H2O. The protein operates within amino-acid biosynthesis; L-tryptophan biosynthesis; L-tryptophan from chorismate: step 5/5. Functionally, the alpha subunit is responsible for the aldol cleavage of indoleglycerol phosphate to indole and glyceraldehyde 3-phosphate. This is Tryptophan synthase alpha chain from Xanthomonas campestris pv. campestris (strain 8004).